The following is a 232-amino-acid chain: Putative homeobox protein NANOG2 (232 aa).

The segment covering 1-10 has biased composition (basic and acidic residues); sequence MDLPIEDSHD. A disordered region spans residues 1 to 39; the sequence is MDLPIEDSHDSSTSPKGKQPTTAEKSATKKEDKVPVKKQ. Over residues 11-25 the composition is skewed to polar residues; it reads SSTSPKGKQPTTAEK. Positions 26 to 35 are enriched in basic and acidic residues; the sequence is SATKKEDKVP. 8 repeat units span residues 123 to 127, 128 to 132, 133 to 137, 143 to 147, 148 to 152, 153 to 157, 158 to 162, and 163 to 167. The 8 X repeats starting with a Trp in each unit stretch occupies residues 123-167; the sequence is WSNQTWNNSIWSNETQNIQSWSNHSWNTQTWCTQSWNNQAWNSPF. The interval 123 to 167 is sufficient for transactivation activity; that stretch reads WSNQTWNNSIWSNETQNIQSWSNHSWNTQTWCTQSWNNQAWNSPF. Residues 168–232 form a sufficient for strong transactivation activity region; that stretch reads YNCGEESLQS…YSTNMQPEDV (65 aa).

The protein belongs to the Nanog homeobox family.

The protein resides in the nucleus. Functionally, probable transcriptional regulator. In Pan troglodytes (Chimpanzee), this protein is Putative homeobox protein NANOG2 (NANOGP1).